Consider the following 264-residue polypeptide: Thiazole synthase (264 aa).

The Schiff-base intermediate with DXP role is filled by lysine 106. 1-deoxy-D-xylulose 5-phosphate is bound by residues glycine 167, 193–194 (AG), and 215–216 (NS).

The protein belongs to the ThiG family. Homotetramer. Forms heterodimers with either ThiH or ThiS.

The protein localises to the cytoplasm. The enzyme catalyses [ThiS sulfur-carrier protein]-C-terminal-Gly-aminoethanethioate + 2-iminoacetate + 1-deoxy-D-xylulose 5-phosphate = [ThiS sulfur-carrier protein]-C-terminal Gly-Gly + 2-[(2R,5Z)-2-carboxy-4-methylthiazol-5(2H)-ylidene]ethyl phosphate + 2 H2O + H(+). It participates in cofactor biosynthesis; thiamine diphosphate biosynthesis. Functionally, catalyzes the rearrangement of 1-deoxy-D-xylulose 5-phosphate (DXP) to produce the thiazole phosphate moiety of thiamine. Sulfur is provided by the thiocarboxylate moiety of the carrier protein ThiS. In vitro, sulfur can be provided by H(2)S. The polypeptide is Thiazole synthase (Azotobacter vinelandii (strain DJ / ATCC BAA-1303)).